The chain runs to 861 residues: Leucine--tRNA ligase (861 aa).

The 'HIGH' region motif lies at 42-52 (PYPSGKLHMGH). Residues 620-624 (KMSKS) carry the 'KMSKS' region motif. Lys623 provides a ligand contact to ATP.

The protein belongs to the class-I aminoacyl-tRNA synthetase family.

The protein localises to the cytoplasm. The catalysed reaction is tRNA(Leu) + L-leucine + ATP = L-leucyl-tRNA(Leu) + AMP + diphosphate. This is Leucine--tRNA ligase from Buchnera aphidicola subsp. Schizaphis graminum (strain Sg).